The following is a 339-amino-acid chain: Dihydroorotase (339 aa).

The Zn(2+) site is built by His-12 and His-14. Residues 14-16 and Asn-40 contribute to the substrate site; that span reads HVR. Residues Lys-94, His-133, His-167, and Asp-239 each contribute to the Zn(2+) site. N6-carboxylysine is present on Lys-94. Residue His-133 coordinates substrate. Asp-239 is a catalytic residue. Residues His-243 and Ala-255 each contribute to the substrate site.

It belongs to the metallo-dependent hydrolases superfamily. DHOase family. Class II DHOase subfamily. Homodimer. Zn(2+) is required as a cofactor.

It catalyses the reaction (S)-dihydroorotate + H2O = N-carbamoyl-L-aspartate + H(+). Its pathway is pyrimidine metabolism; UMP biosynthesis via de novo pathway; (S)-dihydroorotate from bicarbonate: step 3/3. Functionally, catalyzes the reversible cyclization of carbamoyl aspartate to dihydroorotate. The chain is Dihydroorotase from Helicobacter acinonychis (strain Sheeba).